The primary structure comprises 1009 residues: Protein-tyrosine kinase 2-beta (1009 aa).

The FERM domain occupies 39–359 (RILKVCFYSN…GYCRLQGEHQ (321 aa)). Phosphoserine is present on residues S361, S375, and S399. Residue Y402 is modified to Phosphotyrosine; by autocatalysis. The region spanning 425 to 683 (VVLNRILGEG…ELVCSLSDVY (259 aa)) is the Protein kinase domain. ATP-binding positions include 431–439 (LGEGFFGEV), K457, and 503–509 (ELYPYGE). D549 (proton acceptor) is an active-site residue. Y579 is modified (phosphotyrosine). At Y580 the chain carries Phosphotyrosine; by SRC, FYN and LCK. Residues 701 to 725 (TPKILEPTAFQEPPPKPSRPKYRPP) form a disordered region. The span at 712–725 (EPPPKPSRPKYRPP) shows a compositional bias: pro residues. Y722 is subject to Phosphotyrosine. Residue S762 is modified to Phosphoserine. T765 bears the Phosphothreonine mark. Residues 801 to 1009 (KVKMRQILDK…LANLAHPPAE (209 aa)) are interaction with TGFB1I1. Phosphotyrosine is present on residues Y819 and Y834. S839 is modified (phosphoserine). Residue T842 is modified to Phosphothreonine. Position 849 is a phosphotyrosine (Y849). A Phosphoserine modification is found at S866. The segment at 868–1009 (QPTANLDRTD…LANLAHPPAE (142 aa)) is focal adhesion targeting (FAT). Y881 carries the phosphotyrosine; by SRC modification.

The protein belongs to the protein kinase superfamily. Tyr protein kinase family. FAK subfamily. Homodimer, or homooligomer. Interacts with SIRPA and SH2D3C. Interacts with ARHGAP10. Interacts with DLG4. Interacts with KCNA2. Interacts with NPHP1, ASAP1, ASAP2, ARHGAP26, SKAP2 and TGFB1I1. The Tyr-402 phosphorylated form interacts with SRC (via SH2 domain) and SRC family members. Forms a signaling complex with EPHA1, LCK and phosphatidylinositol 3-kinase; upon activation by EFNA1. Interacts with GRB2 (via SH2 domain). Interacts with P53/TP53 and MDM2. Interacts with MYLK. Interacts with BCAR1. Interacts with PDPK1. Interacts (hypophosphorylated) with PXN. Interacts with RB1CC1. Interacts with RHOU. Interacts with VAV1. Interacts with LPXN and PTPN12. In terms of processing, phosphorylated on tyrosine residues in response to various stimuli that elevate the intracellular calcium concentration; this activation is indirect and may be mediated by production of reactive oxygen species (ROS). Tyr-402 is the major autophosphorylation site, but other kinases can also phosphorylate Tyr-402. Autophosphorylation occurs in trans, i.e. one subunit of the dimeric receptor phosphorylates tyrosine residues on the other subunit. Phosphorylation at Tyr-402 promotes interaction with SRC and SRC family members, leading to phosphorylation at Tyr-579; Tyr-580 and Tyr-881. Phosphorylation at Tyr-881 is important for interaction with GRB2. Phosphorylated on tyrosine residues upon activation of FGR and PKC. Recruitment by NPHP1 to cell matrix adhesions initiates Tyr-402 phosphorylation. In monocytes, adherence to substrata is required for tyrosine phosphorylation and kinase activation. Angiotensin II, thapsigargin and L-alpha-lysophosphatidic acid (LPA) also induce autophosphorylation and increase kinase activity. Phosphorylation by MYLK promotes ITGB2 activation and is thus essential to trigger neutrophil transmigration during lung injury. Dephosphorylated by PTPN12. As to expression, most abundant in the brain, with highest levels in amygdala and hippocampus. Low levels in kidney (at protein level). Also expressed in spleen and lymphocytes.

Its subcellular location is the cytoplasm. It localises to the perinuclear region. It is found in the cell membrane. The protein localises to the cell junction. The protein resides in the focal adhesion. Its subcellular location is the cell projection. It localises to the lamellipodium. It is found in the cell cortex. The protein localises to the nucleus. It carries out the reaction L-tyrosyl-[protein] + ATP = O-phospho-L-tyrosyl-[protein] + ADP + H(+). Its activity is regulated as follows. Activated in response to stimuli that lead to increased intracellular Ca(2+) levels; this activation is indirect and may be mediated by calcium-mediated production of reactive oxygen species (ROS). Activated by autophosphorylation at Tyr-402; this creates a binding site for SRC family kinases and leads to phosphorylation at additional tyrosine residues. Phosphorylation at Tyr-402, Tyr-579 and Tyr-580 is required for optimal kinase activity. Inhibited by PF-562,271, BIRB796, PF-4618433 and by PF-431396, PF-2318841 and their derivatives. Inhibited by sulfoximine-substituted trifluoromethylpyrimidines. Inhibited by 4-amino and 5-aryl substituted pyridinone compounds. Its function is as follows. Non-receptor protein-tyrosine kinase that regulates reorganization of the actin cytoskeleton, cell polarization, cell migration, adhesion, spreading and bone remodeling. Plays a role in the regulation of the humoral immune response, and is required for normal levels of marginal B-cells in the spleen and normal migration of splenic B-cells. Required for normal macrophage polarization and migration towards sites of inflammation. Regulates cytoskeleton rearrangement and cell spreading in T-cells, and contributes to the regulation of T-cell responses. Promotes osteoclastic bone resorption; this requires both PTK2B/PYK2 and SRC. May inhibit differentiation and activity of osteoprogenitor cells. Functions in signaling downstream of integrin and collagen receptors, immune receptors, G-protein coupled receptors (GPCR), cytokine, chemokine and growth factor receptors, and mediates responses to cellular stress. Forms multisubunit signaling complexes with SRC and SRC family members upon activation; this leads to the phosphorylation of additional tyrosine residues, creating binding sites for scaffold proteins, effectors and substrates. Regulates numerous signaling pathways. Promotes activation of phosphatidylinositol 3-kinase and of the AKT1 signaling cascade. Promotes activation of NOS3. Regulates production of the cellular messenger cGMP. Promotes activation of the MAP kinase signaling cascade, including activation of MAPK1/ERK2, MAPK3/ERK1 and MAPK8/JNK1. Promotes activation of Rho family GTPases, such as RHOA and RAC1. Recruits the ubiquitin ligase MDM2 to P53/TP53 in the nucleus, and thereby regulates P53/TP53 activity, P53/TP53 ubiquitination and proteasomal degradation. Acts as a scaffold, binding to both PDPK1 and SRC, thereby allowing SRC to phosphorylate PDPK1 at 'Tyr-9, 'Tyr-373', and 'Tyr-376'. Promotes phosphorylation of NMDA receptors by SRC family members, and thereby contributes to the regulation of NMDA receptor ion channel activity and intracellular Ca(2+) levels. May also regulate potassium ion transport by phosphorylation of potassium channel subunits. Phosphorylates SRC; this increases SRC kinase activity. Phosphorylates ASAP1, NPHP1, KCNA2 and SHC1. Promotes phosphorylation of ASAP2, RHOU and PXN; this requires both SRC and PTK2/PYK2. This chain is Protein-tyrosine kinase 2-beta (PTK2B), found in Homo sapiens (Human).